Here is a 103-residue protein sequence, read N- to C-terminus: Small ribosomal subunit protein uS10c (103 aa).

This sequence belongs to the universal ribosomal protein uS10 family. Part of the 30S ribosomal subunit.

The protein localises to the plastid. It is found in the chloroplast. Functionally, involved in the binding of tRNA to the ribosomes. The chain is Small ribosomal subunit protein uS10c from Trieres chinensis (Marine centric diatom).